The chain runs to 357 residues: MVDQATLDKLEAGFKKLQDATDCKSLLKKYLNREVFDQCKSLKTALGATLLDCIQSGVENLDSGVGIYAPDAEAYTLFAPIFNPIIEDYHEGFKPTDKHPPTDFGDINTIVNVDPSGKYVVSTHVRCGRSLKGYPFNPCLTEANYKEMEDKVSAIFGTFEGELKGKYYPLTGMDKATQQQLIDDHFLFKEGDRFLQAANACRYWPTGRGIYHNDAKTFLVWVNEEDHLRIISMQKGGDLKTIFQRLVNAVNTIESKLPFSRDDRLGFLTFCPTNLGTTIRASVHIALPKLAKDKKQLEAIAAKFNLQVRGTRGEHTESEGGVYDISNKRRMGLTEYQAVKEMQDGILEMIKMEEAAP.

Residues 9–91 (KLEAGFKKLQ…FNPIIEDYHE (83 aa)) enclose the Phosphagen kinase N-terminal domain. Position 64–66 (64–66 (GVG)) interacts with L-arginine. Residues 119-356 (YVVSTHVRCG…LEMIKMEEAA (238 aa)) enclose the Phosphagen kinase C-terminal domain. ATP is bound by residues 122–126 (STHVR) and histidine 185. Glutamate 225 is an L-arginine binding site. Residue arginine 229 coordinates ATP. Cysteine 271 is an L-arginine binding site. Residues 280–284 (RASVH) and 309–314 (RGTRGE) each bind ATP.

Belongs to the ATP:guanido phosphotransferase family.

The catalysed reaction is L-arginine + ATP = N(omega)-phospho-L-arginine + ADP + H(+). Catalyzes the reversible transfer of high energy ATP gamma-phosphate group to L-arginine. In Polybetes pythagoricus (South American huntsman spider), this protein is Arginine kinase.